The sequence spans 485 residues: Glutamyl-tRNA(Gln) amidotransferase subunit A (485 aa).

Active-site charge relay system residues include K79 and S154. Residue S178 is the Acyl-ester intermediate of the active site.

Belongs to the amidase family. GatA subfamily. Heterotrimer of A, B and C subunits.

It carries out the reaction L-glutamyl-tRNA(Gln) + L-glutamine + ATP + H2O = L-glutaminyl-tRNA(Gln) + L-glutamate + ADP + phosphate + H(+). Its function is as follows. Allows the formation of correctly charged Gln-tRNA(Gln) through the transamidation of misacylated Glu-tRNA(Gln) in organisms which lack glutaminyl-tRNA synthetase. The reaction takes place in the presence of glutamine and ATP through an activated gamma-phospho-Glu-tRNA(Gln). In Clostridium botulinum (strain Okra / Type B1), this protein is Glutamyl-tRNA(Gln) amidotransferase subunit A.